A 95-amino-acid chain; its full sequence is Co-chaperonin GroES (95 aa).

This sequence belongs to the GroES chaperonin family. Heptamer of 7 subunits arranged in a ring. Interacts with the chaperonin GroEL.

The protein localises to the cytoplasm. Its function is as follows. Together with the chaperonin GroEL, plays an essential role in assisting protein folding. The GroEL-GroES system forms a nano-cage that allows encapsulation of the non-native substrate proteins and provides a physical environment optimized to promote and accelerate protein folding. GroES binds to the apical surface of the GroEL ring, thereby capping the opening of the GroEL channel. This is Co-chaperonin GroES from Xanthomonas axonopodis pv. citri (strain 306).